The sequence spans 1057 residues: Carbamoyl phosphate synthase large chain (1057 aa).

Residues 1–401 form a carboxyphosphate synthetic domain region; sequence MPKRNDIKTI…SLLKAIRSLE (401 aa). ATP is bound by residues R129, R169, G175, G176, K208, I210, E215, G241, I242, H243, Q284, and E298. Positions 133–327 constitute an ATP-grasp 1 domain; that stretch reads RNLMNELNEP…IAKLAAKIAV (195 aa). Residues Q284, E298, and N300 each coordinate Mg(2+). Positions 284, 298, and 300 each coordinate Mn(2+). Positions 402 to 546 are oligomerization domain; it reads YGVHHLGLPN…YGTYETENES (145 aa). Positions 547–929 are carbamoyl phosphate synthetic domain; the sequence is IRSDKKKVVV…ALYKGLVASG (383 aa). One can recognise an ATP-grasp 2 domain in the interval 671-861; sequence EALMQRIEIP…MANLAMKAIL (191 aa). Residues R707, R746, L748, E752, G777, V778, H779, S780, Q820, and E832 each contribute to the ATP site. Mg(2+) contacts are provided by Q820, E832, and N834. Mn(2+) is bound by residues Q820, E832, and N834. The 128-residue stretch at 930–1057 folds into the MGS-like domain; sequence LQVKDHGTVL…ESMTFNMNQM (128 aa). An allosteric domain region spans residues 930–1057; it reads LQVKDHGTVL…ESMTFNMNQM (128 aa).

This sequence belongs to the CarB family. Composed of two chains; the small (or glutamine) chain promotes the hydrolysis of glutamine to ammonia, which is used by the large (or ammonia) chain to synthesize carbamoyl phosphate. Tetramer of heterodimers (alpha,beta)4. The cofactor is Mg(2+). Mn(2+) serves as cofactor.

It catalyses the reaction hydrogencarbonate + L-glutamine + 2 ATP + H2O = carbamoyl phosphate + L-glutamate + 2 ADP + phosphate + 2 H(+). It carries out the reaction hydrogencarbonate + NH4(+) + 2 ATP = carbamoyl phosphate + 2 ADP + phosphate + 2 H(+). The protein operates within amino-acid biosynthesis; L-arginine biosynthesis; carbamoyl phosphate from bicarbonate: step 1/1. It participates in pyrimidine metabolism; UMP biosynthesis via de novo pathway; (S)-dihydroorotate from bicarbonate: step 1/3. Large subunit of the glutamine-dependent carbamoyl phosphate synthetase (CPSase). CPSase catalyzes the formation of carbamoyl phosphate from the ammonia moiety of glutamine, carbonate, and phosphate donated by ATP, constituting the first step of 2 biosynthetic pathways, one leading to arginine and/or urea and the other to pyrimidine nucleotides. The large subunit (synthetase) binds the substrates ammonia (free or transferred from glutamine from the small subunit), hydrogencarbonate and ATP and carries out an ATP-coupled ligase reaction, activating hydrogencarbonate by forming carboxy phosphate which reacts with ammonia to form carbamoyl phosphate. This Macrococcus caseolyticus (strain JCSC5402) (Macrococcoides caseolyticum) protein is Carbamoyl phosphate synthase large chain.